The sequence spans 95 residues: Phospholipase A2 inhibitor gammaCdcPLI (95 aa).

Cystine bridges form between Cys-2–Cys-26, Cys-5–Cys-12, Cys-19–Cys-30, and Cys-61–Cys-77.

In terms of assembly, forms dimers or higher order oligomers in a temperature-dependent manner in vitro. In terms of tissue distribution, expressed by the liver.

The protein resides in the secreted. Its function is as follows. Inhibits the enzymatic activity of basic and acidic PLA2 from B.jararacussu and B.pauloensis, respectively, in a dose-dependent manner. Also inhibits myotoxicity and cytotoxicity of BnSp-7 of B.pauloensis. The polypeptide is Phospholipase A2 inhibitor gammaCdcPLI (Crotalus durissus collilineatus (Brazilian rattlesnake)).